Consider the following 248-residue polypeptide: Inner membrane protein pE248R (248 aa).

A lipid anchor (N-myristoyl glycine; by host) is attached at Gly-2. Topologically, residues 2 to 199 are cytoplasmic; it reads GGSTSKNSFK…ADAISAVFKN (198 aa). The helical transmembrane segment at 200 to 220 threads the bilayer; that stretch reads IMVAAVVIVLIIVGFIAVFYF. At 221–248 the chain is on the extracellular side; sequence LHSRHRHEEEEEAEPLISNKVLKNAAVS.

The protein belongs to the asfivirus E248R family. In terms of assembly, interacts with A151R.

The protein localises to the host membrane. Its subcellular location is the virion membrane. Functionally, essential for viral fusion with host endosomal membrane and core release. The protein is Inner membrane protein pE248R of Ornithodoros (relapsing fever ticks).